Here is a 192-residue protein sequence, read N- to C-terminus: ADP-ribose glycohydrolase AF_1521 (192 aa).

Positions 1-192 (MEVLFEAKVG…VALKVFERSL (192 aa)) constitute a Macro domain. Residues 19–21 (GDI), 32–34 (AAN), 39–44 (HGGGVA), and 140–146 (VSAGIYG) each bind substrate.

It carries out the reaction 5-O-(ADP-D-ribosyl)-L-glutamyl-[protein] + H2O = L-glutamyl-[protein] + ADP-D-ribose + H(+). The enzyme catalyses 4-O-(ADP-D-ribosyl)-L-aspartyl-[protein] + H2O = L-aspartyl-[protein] + ADP-D-ribose + H(+). It catalyses the reaction alpha-NAD(+) + H2O = ADP-D-ribose + nicotinamide + H(+). Its function is as follows. Removes ADP-ribose from aspartate and glutamate residues in proteins bearing a single ADP-ribose moiety. Inactive towards proteins bearing poly-ADP-ribose. Catalyzes removal of a phosphate group from ADP-ribose 1''-phosphate (Appr1p), but with low efficiency. This Archaeoglobus fulgidus (strain ATCC 49558 / DSM 4304 / JCM 9628 / NBRC 100126 / VC-16) protein is ADP-ribose glycohydrolase AF_1521.